The following is a 480-amino-acid chain: MAVARAALGPLVTGLYDVQAFKFGDFVLKSGLSSPIYIDLRGIVSRPRLLSQVADILFQTAQNAGISFDTVCGVPYTALPLATVICSTNQIPMLIRRKETKDYGTKRLVEGTINPGETCLIIEDVVTSGSSVLETVEVLQKEGLKVTDAIVLLDREQGGKDKLQAHGIRLHSVCTLSKMLEILEQQKKVDAETVGRVKRFIQENVFVAANHNGSPLSIKEAPKELSFGARAELPRIHPVASKLLRLMQKKETNLCLSADVSLARELLQLADALGPSICMLKTHVDILNDFTLDVMKELITLAKCHEFLIFEDRKFADIGNTVKKQYEGGIFKIASWADLVNAHVVPGSGVVKGLQEVGLPLHRGCLLIAEMSSTGSLATGDYTRAAVRMAEEHSEFVVGFISGSRVSMKPEFLHLTPGVQLEAGGDNLGQQYNSPQEVIGKRGSDIIIVGRGIISAADRLEAAEMYRKAAWEAYLSRLGV.

Position 2 is an N-acetylalanine (Ala-2). The OPRTase stretch occupies residues 2 to 214 (AVARAALGPL…VFVAANHNGS (213 aa)). Tyr-37 is subject to Phosphotyrosine. Phosphoserine is present on Ser-214. Residues 215–220 (PLSIKE) form a domain linker region. The interval 221–480 (APKELSFGAR…WEAYLSRLGV (260 aa)) is OMPdecase. Ser-257 serves as a coordination point for orotidine 5'-phosphate. Residues Ser-257, Asp-259, and 281–283 (KTH) each bind UMP. Residue Lys-281 coordinates orotidine 5'-phosphate. Active-site for OMPdecase activity residues include Asp-312, Lys-314, and Asp-317. Orotidine 5'-phosphate-binding positions include Lys-314, Asp-317, Thr-321, Ser-372, 430–432 (QQY), and 450–451 (GR). UMP-binding positions include Asp-317, Thr-321, Ser-372, 430–432 (QQY), and 450–451 (GR).

In the N-terminal section; belongs to the purine/pyrimidine phosphoribosyltransferase family. This sequence in the C-terminal section; belongs to the OMP decarboxylase family. In terms of assembly, homodimer; dimerization is required for enzymatic activity.

The enzyme catalyses orotidine 5'-phosphate + diphosphate = orotate + 5-phospho-alpha-D-ribose 1-diphosphate. It carries out the reaction orotidine 5'-phosphate + H(+) = UMP + CO2. It functions in the pathway pyrimidine metabolism; UMP biosynthesis via de novo pathway; UMP from orotate: step 1/2. Its pathway is pyrimidine metabolism; UMP biosynthesis via de novo pathway; UMP from orotate: step 2/2. Functionally, bifunctional enzyme catalyzing the last two steps of de novo pyrimidine biosynthesis, orotate phosphoribosyltransferase (OPRT), which converts orotate to orotidine-5'-monophosphate (OMP), and orotidine-5'-monophosphate decarboxylase (ODC), the terminal enzymatic reaction that decarboxylates OMP to uridine monophosphate (UMP). In Homo sapiens (Human), this protein is Uridine 5'-monophosphate synthase.